The primary structure comprises 258 residues: Large ribosomal subunit protein uL15c (258 aa).

Residues 1–65 constitute a chloroplast transit peptide; the sequence is MSAASLIPVS…NVKSSGENVR (65 aa). A disordered region spans residues 67-90; that stretch reads RLDNLGPQPGSRKRPKRKGRGIAA. The segment covering 77–86 has biased composition (basic residues); the sequence is SRKRPKRKGR.

Belongs to the universal ribosomal protein uL15 family. In terms of assembly, part of the 50S ribosomal subunit.

It is found in the plastid. The protein resides in the chloroplast. This Pisum sativum (Garden pea) protein is Large ribosomal subunit protein uL15c (RPL15).